Reading from the N-terminus, the 1132-residue chain is DNA-directed RNA polymerase I subunit RPA2 (1132 aa).

Residues 1067–1098 (CMDCGSLLSPLLEKPPPNWSATRHRKTICLLC) form a C4-type zinc finger.

It belongs to the RNA polymerase beta chain family. Component of the RNA polymerase I (Pol I) complex consisting of at least 13 subunits.

The protein resides in the nucleus. It is found in the nucleolus. It localises to the chromosome. The enzyme catalyses RNA(n) + a ribonucleoside 5'-triphosphate = RNA(n+1) + diphosphate. DNA-dependent RNA polymerase catalyzes the transcription of DNA into RNA using the four ribonucleoside triphosphates as substrates. Second largest core component of RNA polymerase I which synthesizes ribosomal RNA precursors. Proposed to contribute to the polymerase catalytic activity and forms the polymerase active center together with the largest subunit. Pol I is composed of mobile elements and RPA2 is part of the core element with the central large cleft and probably a clamp element that moves to open and close the cleft. The chain is DNA-directed RNA polymerase I subunit RPA2 (polr1b) from Danio rerio (Zebrafish).